A 271-amino-acid chain; its full sequence is Short-chain dehydrogenase ptmH (271 aa).

NADP(+) is bound by residues Ile-8, Thr-34, Lys-40, Asp-56, Asn-84, Tyr-148, Lys-152, Val-181, and Thr-183. Tyr-148 serves as the catalytic Proton acceptor. Lys-152 acts as the Lowers pKa of active site Tyr in catalysis.

The protein belongs to the short-chain dehydrogenases/reductases (SDR) family.

The protein operates within secondary metabolite biosynthesis. Functionally, short-chain dehydrogenase; part of the gene cluster that mediates the biosynthesis of the indole diterpenes penitrems. The geranylgeranyl diphosphate (GGPP) synthase ptmG catalyzes the first step in penitrem biosynthesis via conversion of farnesyl pyrophosphate and isopentyl pyrophosphate into geranylgeranyl pyrophosphate (GGPP). Condensation of indole-3-glycerol phosphate with GGPP by the prenyl transferase ptmC then forms 3-geranylgeranylindole (3-GGI). Epoxidation by the FAD-dependent monooxygenase ptmM leads to a epoxidized-GGI that is substrate of the terpene cyclase ptmB for cyclization to yield paspaline. Paspaline is subsequently converted to 13-desoxypaxilline by the cytochrome P450 monooxygenase ptmP, the latter being then converted to paxilline by the cytochrome P450 monooxygenase ptmQ. Paxilline is converted to beta-paxitriol via C-10 ketoreduction by the short-chain dehydrogenase ptmH which can be monoprenylated at the C-20 by the indole diterpene prenyltransferase ptmD. A two-step elimination (acetylation and elimination) process performed by the O-acetyltransferase ptmV and ptmI leads to the production of the prenylated form of penijanthine. The FAD-linked oxidoreductase ptmO then converts the prenylated form of penijanthine into PC-M5 which is in turn transformed into PC-M4 by the aromatic dimethylallyltransferase ptmE. Five sequential oxidative transformations performed by the cytochrome P450 monooxygenases ptmK, ptmU, ptmL, ptmN and ptmJ yield the various penitrem compounds. PtmK, ptmU and ptmM are involved in the formation of the key bicyclic ring of penitrem C via the formation of the intermediates secopenitrem D and penitrem D. PtmL catalyzes the epoxidation of penitrem D and C to yield penitrem B and F, respectively. PtmJ catalyzes the last benzylic hydroxylation to convert penitrem B to prenitrem E and penitrem F to penitrem A. The chain is Short-chain dehydrogenase ptmH from Penicillium ochrochloron.